Here is a 209-residue protein sequence, read N- to C-terminus: Large ribosomal subunit protein uL3 (209 aa).

Residues 133 to 152 (THGNSLSHRVPGSIGQNQTP) are disordered. Gln150 is subject to N5-methylglutamine.

This sequence belongs to the universal ribosomal protein uL3 family. As to quaternary structure, part of the 50S ribosomal subunit. Forms a cluster with proteins L14 and L19. Post-translationally, methylated by PrmB.

One of the primary rRNA binding proteins, it binds directly near the 3'-end of the 23S rRNA, where it nucleates assembly of the 50S subunit. This chain is Large ribosomal subunit protein uL3, found in Sodalis glossinidius (strain morsitans).